The primary structure comprises 273 residues: Octanoyl-[GcvH]:protein N-octanoyltransferase (273 aa).

Positions 40–245 (ATEGAAIRSW…SLMELGATLT (206 aa)) constitute a BPL/LPL catalytic domain. C144 serves as the catalytic Acyl-thioester intermediate.

It belongs to the octanoyltransferase LipL family.

It catalyses the reaction N(6)-octanoyl-L-lysyl-[glycine-cleavage complex H protein] + L-lysyl-[lipoyl-carrier protein] = N(6)-octanoyl-L-lysyl-[lipoyl-carrier protein] + L-lysyl-[glycine-cleavage complex H protein]. It participates in protein modification; protein lipoylation via endogenous pathway; protein N(6)-(lipoyl)lysine from octanoyl-[acyl-carrier-protein]. Catalyzes the amidotransfer (transamidation) of the octanoyl moiety from octanoyl-GcvH to the lipoyl domain of the E2 subunit of lipoate-dependent enzymes. This chain is Octanoyl-[GcvH]:protein N-octanoyltransferase, found in Exiguobacterium sibiricum (strain DSM 17290 / CCUG 55495 / CIP 109462 / JCM 13490 / 255-15).